Reading from the N-terminus, the 111-residue chain is Disintegrin acostatin-alpha (111 aa).

An N-terminal signal peptide occupies residues 1 to 20; that stretch reads MIQVLLVTLCLAVFPYQGSS. Positions 21 to 46 are excised as a propeptide; that stretch reads IILESGNVNDYEVVYPRKVTALPKGA. Residues 47–111 enclose the Disintegrin domain; sequence IQPKNPCCDA…GDCPRKHFYA (65 aa). Residue Q48 is modified to Pyrrolidone carboxylic acid; in Disintegrin acostatin-alpha, processed form. 4 disulfides stabilise this stretch: C53–C76, C67–C73, C72–C97, and C85–C104. The short motif at 89–91 is the Cell attachment site element; the sequence is RGD. The propeptide occupies 110-111; sequence YA.

Belongs to the disintegrin family. Dimeric disintegrin subfamily. Heterodimer with subunit beta; disulfide-linked. Expressed by the venom gland.

The protein resides in the secreted. Inhibits fibrinogen interaction with platelets. Acts by binding to alpha-IIb/beta-3 (ITGA2B/ITGB3) on the platelet surface and inhibits ADP-induced platelet aggregation in human platelet-rich plasma. The protein is Disintegrin acostatin-alpha of Agkistrodon contortrix contortrix (Southern copperhead).